A 365-amino-acid polypeptide reads, in one-letter code: Zinc finger TRAF-type-containing protein 1-A (365 aa).

The tract at residues 1–56 is disordered; sequence MSEEREAPGPLASSSAGLGAEVGQEEVPGGAGPARLLLLPSDSDGPPKKRLRSEAE. Residues 72–117 form an RING-type; degenerate zinc finger; the sequence is CTVCLDLPKASVYQCTNGHLMCAGCFIHLLADSRLKEEQATCPNCR. The TRAF-type zinc-finger motif lies at 113 to 186; the sequence is CPNCRCEISK…PWEGPYHELT (74 aa).

Belongs to the ZFTRAF1 family.

It localises to the cytoplasm. In Xenopus laevis (African clawed frog), this protein is Zinc finger TRAF-type-containing protein 1-A.